We begin with the raw amino-acid sequence, 199 residues long: Putative ATP-dependent Clp protease proteolytic subunit-like (199 aa).

The protein belongs to the peptidase S14 family. As to quaternary structure, component of the chloroplastic Clp protease core complex.

The protein localises to the plastid. Its subcellular location is the cyanelle. Has lost the two conserved residues (Ser and His) proposed to be part of the active site. Therefore it could be inactive. The protein is Putative ATP-dependent Clp protease proteolytic subunit-like (clpP-B) of Cyanophora paradoxa.